Reading from the N-terminus, the 473-residue chain is Glutamate--tRNA ligase (473 aa).

Positions Pro-11–Gly-21 match the 'HIGH' region motif. The 'KMSKS' region motif lies at Lys-240 to Arg-244. Residue Lys-243 coordinates ATP.

Belongs to the class-I aminoacyl-tRNA synthetase family. Glutamate--tRNA ligase type 1 subfamily. Monomer.

Its subcellular location is the cytoplasm. The enzyme catalyses tRNA(Glu) + L-glutamate + ATP = L-glutamyl-tRNA(Glu) + AMP + diphosphate. Catalyzes the attachment of glutamate to tRNA(Glu) in a two-step reaction: glutamate is first activated by ATP to form Glu-AMP and then transferred to the acceptor end of tRNA(Glu). This chain is Glutamate--tRNA ligase, found in Rhodopseudomonas palustris (strain BisB5).